We begin with the raw amino-acid sequence, 520 residues long: Rho GTPase-activating protein gacV (520 aa).

Residues 8–28 (NIKTYYIIGIITLIFIVSAVI) form a helical membrane-spanning segment. Residues 28 to 192 (IKNQLSSSNQ…EEQEEEQFSM (165 aa)) are a coiled coil. Disordered regions lie at residues 33–73 (SSSN…KLDN), 121–189 (EEKQ…EEEQ), 348–373 (NNNN…NNNE), and 489–520 (LQEQ…DQEE). Residues 52-62 (SKGRGNKKGKK) are compositionally biased toward basic residues. The span at 63–73 (PEKIQEKKLDN) shows a compositional bias: basic and acidic residues. Residues 140-189 (QEEEEEEEEQQEIEEDEEEEEGQEQEEEEEQQEIEEGEEEQQEEEQEEEQ) are compositionally biased toward acidic residues. Residues 195–472 (VSIERLMDFQ…ILLKQKKEIA (278 aa)) form the Rho-GAP domain. Over residues 348–372 (NNNNNNNNNNNNNNNNNNDNNNNNN) the composition is skewed to low complexity. A coiled-coil region spans residues 480-520 (YFKDEYSKKLQEQNDQEEDNQEEEKDNQEEDEDEEDKDQEE). Over residues 493–520 (NDQEEDNQEEEKDNQEEDEDEEDKDQEE) the composition is skewed to acidic residues.

It localises to the membrane. Functionally, rho GTPase-activating protein involved in the signal transduction pathway. The protein is Rho GTPase-activating protein gacV (gacV) of Dictyostelium discoideum (Social amoeba).